We begin with the raw amino-acid sequence, 330 residues long: Polyprenyl transferase dpfgC (330 aa).

An N-linked (GlcNAc...) asparagine glycan is attached at N34. The next 7 membrane-spanning stretches (helical) occupy residues 105 to 125 (ALCV…NDWI), 146 to 166 (VTTT…WGVL), 175 to 192 (VLKH…YPFG), 199 to 219 (KLMI…AIPG), 237 to 257 (CLPL…AYSY), 273 to 293 (NIAG…IILA), and 310 to 330 (NFIL…LTSA).

The protein belongs to the UbiA prenyltransferase family. Requires Mg(2+) as cofactor.

The protein localises to the membrane. It functions in the pathway secondary metabolite biosynthesis; terpenoid biosynthesis. In terms of biological role, polyprenyl transferase; part of the gene cluster that mediates the biosynthesis of diterpenoid pyrones. The first step of the pathway is the synthesis of the alpha-pyrone moiety by the polyketide synthase dpfgA via condensation of one acetyl-CoA starter unit with 3 malonyl-CoA units and 2 methylations. The alpha-pyrone is then combined with geranylgeranyl pyrophosphate (GGPP) formed by the GGPP synthase dpfgD through the action of the prenyltransferase dpfgC to yield a linear alpha-pyrone diterpenoid. Subsequent steps in the diterpenoid pyrone biosynthetic pathway involve the decalin core formation, which is initiated by the epoxidation of the C10-C11 olefin by the FAD-dependent oxidoreductase dpfgE, and is followed by a cyclization cascade catalyzed by the terpene cyclase dpfgB. The short chain dehydrogenase/reductase dpfgG then oxidizes the 8S hydroxy group to a ketone and the short chain dehydrogenase/reductase dpfgH reduces the ketone to the 8R hydroxy group to yield higginsianin B. Higginsianin B is further methylated by the methyltransferase dpfgI to produce the intermediate named FDDP B. The cytochrome P450 monooxygenase dfgpJ then catalyzes a three-step oxidation at C-27 to generate a carboxylic acid as well as C-26 hydroxylation. Finally, methyltransferase dpfgK methylates the carboxylic acid generated by dpfgJ, yielding the final diterpenoid pyrones from the pathway which were named FDDP D and FDDP E. The chain is Polyprenyl transferase dpfgC from Gibberella zeae (strain ATCC MYA-4620 / CBS 123657 / FGSC 9075 / NRRL 31084 / PH-1) (Wheat head blight fungus).